The following is a 161-amino-acid chain: Cytochrome c-type biogenesis protein CcmE (161 aa).

The Cytoplasmic portion of the chain corresponds to Met-1 to Arg-8. The helical; Signal-anchor for type II membrane protein transmembrane segment at Leu-9–Ala-29 threads the bilayer. The Periplasmic portion of the chain corresponds to Leu-30–Tyr-161. Heme contacts are provided by His-131 and Tyr-135.

Belongs to the CcmE/CycJ family.

It is found in the cell inner membrane. In terms of biological role, heme chaperone required for the biogenesis of c-type cytochromes. Transiently binds heme delivered by CcmC and transfers the heme to apo-cytochromes in a process facilitated by CcmF and CcmH. This Shewanella loihica (strain ATCC BAA-1088 / PV-4) protein is Cytochrome c-type biogenesis protein CcmE.